Consider the following 279-residue polypeptide: Uroplakin-3b (279 aa).

Positions 1–26 (MGLPSRQPRLWLLLLVVLGWPQPCLT) are cleaved as a signal peptide. Residues 27–200 (LDLIPYTPRI…DTWPGRRSGD (174 aa)) are Lumenal-facing. Residue Asn-77 is glycosylated (N-linked (GlcNAc...) asparagine). The chain crosses the membrane as a helical span at residues 201–221 (MIIITSILSSLAGLLLLAFLA). Topologically, residues 222–279 (ASSVRFSSLWWPEEAPEQLRIGSFMGKRYMTHHIPPSEAATLPVGCEPGLERFPSLSP) are cytoplasmic.

This sequence belongs to the uroplakin-3 family. Heterodimer with uroplakin-1B (UPK1B). As to expression, expression is urothelium-specific.

The protein localises to the cell membrane. Functionally, component of the asymmetric unit membrane (AUM); a highly specialized biomembrane elaborated by terminally differentiated urothelial cells. May play an important role in AUM-cytoskeleton interaction in terminally differentiated urothelial cells. It also contributes to the formation of urothelial glycocalyx which may play an important role in preventing bacterial adherence. This is Uroplakin-3b (UPK3B) from Bos taurus (Bovine).